A 677-amino-acid chain; its full sequence is MSLAVKDLSTASSSSSKAIPVKIIPLQYPDSTSSDPHCHSIPFNDFFSRWTAKIKRMTFFDWIDAIFPCFLWIRTYRWHQYFKLDLMAGITVGIMLVPQAMSYARLAGLQPIYGLYSSFVPVFVYAVFGSSRQLAVGPVALVSLLVSNALSGIVDPSEELYTELAILLALMVGIFESIMGFLRLGWLIRFISHSVISGFTTASAVVIGLSQLKYFLGYSVSRSSKIMPVIDSIIAGADQFKWPPFLLGCTILVILLVMKHVGKAKKELRFIRAAGPLTGLALGTIIAKVFHPPSITLVGDIPQGLPKFSFPKSFDHAKLLLPTSALITGVAILESVGIAKALAAKNRYELDSNSELFGLGVANIFGSLFSAYPTTGSFSRSAVNSESEAKTGLSGLVTGIIIGCSLLFLTPMFKFIPQCALAAIVISAVSGLVDYEGAIFLWRVDKRDFTLWTITSTTTLFFGIEIGVLIGVGFSLAFVIHESANPHIAVLGRLPGTTVYRNMKQYPEAYTYNGIVIVRIDAPIYFANISYIKDRLREYEVAIDKHTSKGPDMERIYFVILEMSPVTYIDSSAVEALKDLYEEYKTRGIQLAISNPNKEVLLTLARAGIVELIGKEWFFVRVHDAVQVCVHYVNRPTDVEESSKPSLWRRSGLKNSSTYTEVESNIVLEEPLLSREK.

The Cytoplasmic portion of the chain corresponds to 1-83 (MSLAVKDLST…RTYRWHQYFK (83 aa)). A helical membrane pass occupies residues 84-104 (LDLMAGITVGIMLVPQAMSYA). The Extracellular segment spans residues 105 to 108 (RLAG). A helical membrane pass occupies residues 109 to 129 (LQPIYGLYSSFVPVFVYAVFG). Residues 130–133 (SSRQ) lie on the Cytoplasmic side of the membrane. The chain crosses the membrane as a helical span at residues 134 to 154 (LAVGPVALVSLLVSNALSGIV). Topologically, residues 155–161 (DPSEELY) are extracellular. Residues 162 to 182 (TELAILLALMVGIFESIMGFL) form a helical membrane-spanning segment. The Cytoplasmic portion of the chain corresponds to 183–189 (RLGWLIR). Residues 190-210 (FISHSVISGFTTASAVVIGLS) form a helical membrane-spanning segment. The Extracellular segment spans residues 211-241 (QLKYFLGYSVSRSSKIMPVIDSIIAGADQFK). The chain crosses the membrane as a helical span at residues 242 to 262 (WPPFLLGCTILVILLVMKHVG). Topologically, residues 263-269 (KAKKELR) are cytoplasmic. The helical transmembrane segment at 270-290 (FIRAAGPLTGLALGTIIAKVF) threads the bilayer. The Extracellular portion of the chain corresponds to 291 to 318 (HPPSITLVGDIPQGLPKFSFPKSFDHAK). The helical transmembrane segment at 319 to 339 (LLLPTSALITGVAILESVGIA) threads the bilayer. The Cytoplasmic portion of the chain corresponds to 340–355 (KALAAKNRYELDSNSE). A helical membrane pass occupies residues 356 to 376 (LFGLGVANIFGSLFSAYPTTG). Topologically, residues 377–392 (SFSRSAVNSESEAKTG) are extracellular. The chain crosses the membrane as a helical span at residues 393–413 (LSGLVTGIIIGCSLLFLTPMF). Residues 414-420 (KFIPQCA) are Cytoplasmic-facing. Residues 421 to 441 (LAAIVISAVSGLVDYEGAIFL) traverse the membrane as a helical segment. Over 442–459 (WRVDKRDFTLWTITSTTT) the chain is Extracellular. Residues 460–480 (LFFGIEIGVLIGVGFSLAFVI) traverse the membrane as a helical segment. Over 481–677 (HESANPHIAV…LEEPLLSREK (197 aa)) the chain is Cytoplasmic. One can recognise an STAS domain in the interval 505–629 (QYPEAYTYNG…VRVHDAVQVC (125 aa)).

Belongs to the SLC26A/SulP transporter (TC 2.A.53) family.

Its subcellular location is the membrane. In terms of biological role, h(+)/sulfate cotransporter that may play a role in the regulation of sulfate assimilation. This chain is Probable sulfate transporter 4.2 (SULTR4;2), found in Arabidopsis thaliana (Mouse-ear cress).